The sequence spans 321 residues: Cytochrome f (321 aa).

The first 38 residues, 1-38, serve as a signal peptide directing secretion; that stretch reads MKKNFYTISKTMSRSLKLILFSVFIGFSIFLIPQPTWA. Heme is bound by residues Tyr-39, Cys-59, Cys-62, and His-63. A helical membrane pass occupies residues 288–308; that stretch reads VIGMIIFFIGVGLSQIMLVLK.

It belongs to the cytochrome f family. In terms of assembly, the 4 large subunits of the cytochrome b6-f complex are cytochrome b6, subunit IV (17 kDa polypeptide, PetD), cytochrome f and the Rieske protein, while the 4 small subunits are PetG, PetL, PetM and PetN. The complex functions as a dimer. Heme is required as a cofactor.

The protein resides in the cellular thylakoid membrane. In terms of biological role, component of the cytochrome b6-f complex, which mediates electron transfer between photosystem II (PSII) and photosystem I (PSI), cyclic electron flow around PSI, and state transitions. This Prochlorococcus marinus (strain NATL2A) protein is Cytochrome f.